Reading from the N-terminus, the 681-residue chain is Sodium-dependent phosphate transporter 1 (681 aa).

The next 6 membrane-spanning stretches (helical) occupy residues 25–45 (NLWMLILGFIIAFVLAFSVGA), 66–86 (ACILASIFETVGSALLGAKVS), 106–126 (LMAGSVSAMFGSAVWQLVASF), 162–182 (IVMSWFVSPLLSGIMSGILFF), 201–221 (ALPIFYACTIGINLFSIMYTG), and 234–254 (GTILISVGCAVFCALIVWFFV). Positions 266-295 (VKSSPSESPLMEKKSNLKEDHEETKMAPGD) are disordered. Residues serine 269 and serine 273 each carry the phosphoserine modification. A compositionally biased stretch (basic and acidic residues) spans 275 to 295 (LMEKKSNLKEDHEETKMAPGD). The helical transmembrane segment at 514 to 534 (VSLLFQFLQILTACFGSFAHG) threads the bilayer. The interval 553 to 560 (KQEASTKA) is a. The next 3 helical transmembrane spans lie at 561–581 (ATPIWLLLYGGVGICMGLWVW), 602–622 (FSIELASALTVVIASNIGLPI), and 652–672 (IFMAWFVTVPISGVISAAIMA).

Belongs to the inorganic phosphate transporter (PiT) (TC 2.A.20) family. As to expression, ubiquitously expressed.

The protein localises to the cell membrane. The enzyme catalyses 2 Na(+)(out) + phosphate(out) = 2 Na(+)(in) + phosphate(in). Functionally, sodium-phosphate symporter which preferentially transports the monovalent form of phosphate with a stoichiometry of two sodium ions per phosphate ion. May play a role in extracellular matrix and cartilage calcification as well as in vascular calcification. Essential for cell proliferation but this function is independent of its phosphate transporter activity. Its function is as follows. (Microbial infection) May function as a retroviral receptor but do not confer infection susceptibility to Gibbon Ape Leukemia Virus (GaLV), Simian sarcoma-associated virus (SSAV) and Feline leukemia virus subgroup B (FeLV-B). The polypeptide is Sodium-dependent phosphate transporter 1 (Slc20a1) (Mus musculus (Mouse)).